The chain runs to 826 residues: BLOC-2 complex member HPS5 homolog (826 aa).

WD repeat units lie at residues 22 to 61, 63 to 102, and 110 to 149; these read KHHN…LLLI, NKHG…QATP, and DQSV…GHSL. Residues 422–446 show a composition bias toward polar residues; sequence ALDTHSSGGSSATTERSLSGGSSSR. A disordered region spans residues 422–447; the sequence is ALDTHSSGGSSATTERSLSGGSSSRA.

Belongs to the HPS5 family. In terms of tissue distribution, expressed in eye pigment granules.

Functionally, has a role in the biogenesis of eye pigment granules. Eye pigment granules are specialized forms of late endosomes or lysosomes. Biogenesis of pigment granules in the eye requires molecular components required for protein delivery to lysosomes. This Drosophila melanogaster (Fruit fly) protein is BLOC-2 complex member HPS5 homolog.